Here is a 765-residue protein sequence, read N- to C-terminus: Nucleolar transcription factor 1 (765 aa).

Met-1 carries the post-translational modification N-acetylmethionine. Residues 1 to 21 are disordered; the sequence is MNGEADCPTDLEMAAPKGQDR. 2 DNA-binding regions (HMG box) span residues 112–180 and 196–264; these read PKKP…ARFR and PEKP…RDYI. Position 201 is a phosphothreonine (Thr-201). Residues Ser-273, Ser-336, and Ser-364 each carry the phosphoserine modification. Residues 298–362 constitute a DNA-binding region (HMG box 3); the sequence is TKPPPNSYSL…DYEVELLRFL (65 aa). A compositionally biased stretch (basic and acidic residues) spans 370–379; the sequence is QQRVLGEEKM. The tract at residues 370–411 is disordered; the sequence is QQRVLGEEKMLNINKKQTTSPASKKPSQEGGKGGSEKPKRPV. 9 positions are modified to phosphoserine: Ser-389, Ser-412, Ser-433, Ser-435, Ser-484, Ser-495, Ser-546, Ser-584, and Ser-638. 3 DNA-binding regions (HMG box) span residues 407 to 475, 482 to 549, and 568 to 634; these read PKRP…GGER, PESP…SEMR, and KKPP…DLWV. The segment at 456 to 487 is disordered; sequence YKAREAALKAQSERKPGGEREDRGKLPESPKR. Over residues 457 to 487 the composition is skewed to basic and acidic residues; the sequence is KAREAALKAQSERKPGGEREDRGKLPESPKR. The disordered stretch occupies residues 546–576; sequence SEMRAPPAATNSSKKMKFQGEPKKPPMNGYQ. Residues 649–765 form a disordered region; sequence ISNKRKNMTK…SGDSSDSGSN (117 aa). The segment covering 664–674 has biased composition (polar residues); the sequence is PKSSRTTLQSK. The segment covering 677 to 746 has biased composition (acidic residues); the sequence is SEEDDDEEEE…DDDEDEDNES (70 aa). A compositionally biased stretch (low complexity) spans 747–765; that stretch reads EGSSSSSSSSGDSSDSGSN.

Homodimer. Part of Pol I pre-initiation complex (PIC), in which Pol I core assembles with RRN3 and promoter-bound UTBF and SL1/TIF-IB complex. Interacts with TOP2A in the context of Pol I complex. Interacts with TBP. Interacts with TAF1A. Interacts with RASL11A. Binds to IRS1 and PIK3CA. Interacts with DHX33. Interacts with PHF6. Interacts with CEBPA (isoform 1 and isoform 4). Interacts with DDX11. Interacts with NOP53. Interacts with ALKBH2. Post-translationally, phosphorylated and activated by PIK3CA.

It is found in the nucleus. It localises to the nucleolus. Its function is as follows. Recognizes the ribosomal RNA gene promoter and activates transcription mediated by RNA polymerase I through cooperative interactions with the transcription factor SL1/TIF-IB complex. It binds specifically to the upstream control element. This chain is Nucleolar transcription factor 1 (Ubtf), found in Mus musculus (Mouse).